The following is a 137-amino-acid chain: Nucleoside diphosphate kinase (137 aa).

ATP contacts are provided by Lys9, Phe57, Arg85, Thr91, Arg102, and Asn112. His115 serves as the catalytic Pros-phosphohistidine intermediate.

Belongs to the NDK family. As to quaternary structure, homotetramer. Mg(2+) serves as cofactor.

Its subcellular location is the cytoplasm. It carries out the reaction a 2'-deoxyribonucleoside 5'-diphosphate + ATP = a 2'-deoxyribonucleoside 5'-triphosphate + ADP. The catalysed reaction is a ribonucleoside 5'-diphosphate + ATP = a ribonucleoside 5'-triphosphate + ADP. Major role in the synthesis of nucleoside triphosphates other than ATP. The ATP gamma phosphate is transferred to the NDP beta phosphate via a ping-pong mechanism, using a phosphorylated active-site intermediate. The protein is Nucleoside diphosphate kinase of Thermus thermophilus (strain ATCC BAA-163 / DSM 7039 / HB27).